The chain runs to 757 residues: Nitrogen fixation protein FixI (757 aa).

At 1 to 121 (MSCCASSAAI…GEEEGDDLLK (121 aa)) the chain is on the cytoplasmic side. In terms of domain architecture, HMA spans 37-107 (RQTELSVPNA…AIAERGYQTH (71 aa)). A metal cation-binding residues include Cys-48 and Cys-51. The chain crosses the membrane as a helical span at residues 122–143 (QLILAVAVSGFAATNIMLLSVS). The Extracellular segment spans residues 144 to 158 (VWSGADAATRDLFHW). The chain crosses the membrane as a helical span at residues 159–178 (ISALIAGPALIYAGRFFYKS). Topologically, residues 179–185 (AWNAIRH) are cytoplasmic. Residues 186–206 (GRTNMDVPIALAVSLSYGMSL) traverse the membrane as a helical segment. The Extracellular portion of the chain corresponds to 207-218 (HETIGHGEHAWF). Residues 219–239 (DASVTLLFFLLIGRTLDHMMR) traverse the membrane as a helical segment. The Cytoplasmic segment spans residues 240-368 (GRARTAISGL…RARYRRIADR (129 aa)). Residues 369-391 (AARYYSPAVHLLALLTFVGWMLV) form a helical membrane-spanning segment. Residues 392–398 (EGDVRHA) lie on the Extracellular side of the membrane. A helical transmembrane segment spans residues 399 to 416 (MLVAVAVLIITCPCALGL). At 417–688 (AVPVVQVVAA…ETSRHAGQLI (272 aa)) the chain is on the cytoplasmic side. Residue Asp-454 is the 4-aspartylphosphate intermediate of the active site. 2 residues coordinate Mg(2+): Asp-634 and Asp-638. The chain crosses the membrane as a helical span at residues 689 to 708 (RQNFALAIGYNVIAVPIAIL). Residues 709 to 713 (GYATP) are Extracellular-facing. The chain crosses the membrane as a helical span at residues 714–732 (LVAAVAMSSSSLVVVFNAL). Residues 733–757 (RLKRSLAAGRGATPGTLIHSGAVTS) lie on the Cytoplasmic side of the membrane.

This sequence belongs to the cation transport ATPase (P-type) (TC 3.A.3) family. Type IB subfamily.

The protein localises to the cell membrane. It catalyses the reaction ATP + H2O = ADP + phosphate + H(+). FixI is a pump of a specific cation involved in symbiotic nitrogen fixation. The four proteins FixG, FixH, FixI, and FixS may participate in a membrane-bound complex coupling the FixI cation pump with a redox process catalyzed by FixG. This Rhizobium meliloti (strain 1021) (Ensifer meliloti) protein is Nitrogen fixation protein FixI (fixI).